Consider the following 302-residue polypeptide: MTEPQEQLLQLQKDNRDGRLRKQELEELVRGLEAESESLTGRLEELRERERSLQRRRSQASRAIRGEACEAARERAERARGLLEAAEQHRQDLEQHNRKLQEQWEELSSQLFYYGGEQLSQQRAEQQLGNQLVALQKHLELAEAKFSMQAEDLRQGAQRTEEAWASFQEQSGVLQELQGKVMEAAAALEATRGGSEPWNSEPRPVQDCAGSLMEEVARADCEKRLFGGTGAGSLRLWALSALQTLLLLPLGFLVLPLIYVVLAKPDAVGPGLQSLGSDAVFRRLRYTLSPLLELRARGLLPA.

A coiled-coil region spans residues 5 to 147 (QEQLLQLQKD…HLELAEAKFS (143 aa)). Residues 39-66 (LTGRLEELRERERSLQRRRSQASRAIRG) are disordered. Positions 42 to 53 (RLEELRERERSL) are enriched in basic and acidic residues. The helical transmembrane segment at 242-262 (LQTLLLLPLGFLVLPLIYVVL) threads the bilayer.

Belongs to the TMEM191 family.

The protein resides in the membrane. This Mus musculus (Mouse) protein is Transmembrane protein 191.